We begin with the raw amino-acid sequence, 171 residues long: Large ribosomal subunit protein uL10 (171 aa).

It belongs to the universal ribosomal protein uL10 family. As to quaternary structure, part of the ribosomal stalk of the 50S ribosomal subunit. The N-terminus interacts with L11 and the large rRNA to form the base of the stalk. The C-terminus forms an elongated spine to which L12 dimers bind in a sequential fashion forming a multimeric L10(L12)X complex.

In terms of biological role, forms part of the ribosomal stalk, playing a central role in the interaction of the ribosome with GTP-bound translation factors. The chain is Large ribosomal subunit protein uL10 from Hyphomonas neptunium (strain ATCC 15444).